We begin with the raw amino-acid sequence, 205 residues long: High frequency lysogenization protein HflD homolog (205 aa).

Belongs to the HflD family.

Its subcellular location is the cytoplasm. The protein localises to the cell inner membrane. In Vibrio cholerae serotype O1 (strain ATCC 39541 / Classical Ogawa 395 / O395), this protein is High frequency lysogenization protein HflD homolog.